Reading from the N-terminus, the 227-residue chain is Cytochrome c oxidase subunit 2 (227 aa).

The Mitochondrial intermembrane portion of the chain corresponds to 1–14 (MANHSQLGFQDASS). Residues 15–45 (PIMEELVEFHDHALMVALAICSLVLYLLTLM) form a helical membrane-spanning segment. Residues 46-58 (LTQKLSSNTVDAQ) are Mitochondrial matrix-facing. Residues 59-86 (EVELIWTILPAIVLVLLALPSLQILYMM) form a helical membrane-spanning segment. The Mitochondrial intermembrane segment spans residues 87–227 (DEIEEPDLTL…FETWSSLLSS (141 aa)). Cu cation is bound by residues histidine 160, cysteine 195, glutamate 197, cysteine 199, histidine 203, and methionine 206. Glutamate 197 contributes to the Mg(2+) binding site.

It belongs to the cytochrome c oxidase subunit 2 family. As to quaternary structure, component of the cytochrome c oxidase (complex IV, CIV), a multisubunit enzyme composed of 14 subunits. The complex is composed of a catalytic core of 3 subunits MT-CO1, MT-CO2 and MT-CO3, encoded in the mitochondrial DNA, and 11 supernumerary subunits COX4I, COX5A, COX5B, COX6A, COX6B, COX6C, COX7A, COX7B, COX7C, COX8 and NDUFA4, which are encoded in the nuclear genome. The complex exists as a monomer or a dimer and forms supercomplexes (SCs) in the inner mitochondrial membrane with NADH-ubiquinone oxidoreductase (complex I, CI) and ubiquinol-cytochrome c oxidoreductase (cytochrome b-c1 complex, complex III, CIII), resulting in different assemblies (supercomplex SCI(1)III(2)IV(1) and megacomplex MCI(2)III(2)IV(2)). Found in a complex with TMEM177, COA6, COX18, COX20, SCO1 and SCO2. Interacts with TMEM177 in a COX20-dependent manner. Interacts with COX20. Interacts with COX16. The cofactor is Cu cation.

Its subcellular location is the mitochondrion inner membrane. It carries out the reaction 4 Fe(II)-[cytochrome c] + O2 + 8 H(+)(in) = 4 Fe(III)-[cytochrome c] + 2 H2O + 4 H(+)(out). Its function is as follows. Component of the cytochrome c oxidase, the last enzyme in the mitochondrial electron transport chain which drives oxidative phosphorylation. The respiratory chain contains 3 multisubunit complexes succinate dehydrogenase (complex II, CII), ubiquinol-cytochrome c oxidoreductase (cytochrome b-c1 complex, complex III, CIII) and cytochrome c oxidase (complex IV, CIV), that cooperate to transfer electrons derived from NADH and succinate to molecular oxygen, creating an electrochemical gradient over the inner membrane that drives transmembrane transport and the ATP synthase. Cytochrome c oxidase is the component of the respiratory chain that catalyzes the reduction of oxygen to water. Electrons originating from reduced cytochrome c in the intermembrane space (IMS) are transferred via the dinuclear copper A center (CU(A)) of subunit 2 and heme A of subunit 1 to the active site in subunit 1, a binuclear center (BNC) formed by heme A3 and copper B (CU(B)). The BNC reduces molecular oxygen to 2 water molecules using 4 electrons from cytochrome c in the IMS and 4 protons from the mitochondrial matrix. This chain is Cytochrome c oxidase subunit 2 (MT-CO2), found in Coturnix japonica (Japanese quail).